Here is a 210-residue protein sequence, read N- to C-terminus: uncharacterized protein (210 aa).

The protein localises to the mitochondrion. This is an uncharacterized protein from Schizosaccharomyces pombe (strain 972 / ATCC 24843) (Fission yeast).